Consider the following 56-residue polypeptide: Ferredoxin (56 aa).

4Fe-4S ferredoxin-type domains follow at residues 2–29 and 29–56; these read AYVINDSCISCGACEPECPVNAITAGDD and DKYVIDAATCIDCGACAGVCPVDAPQPE. [4Fe-4S] cluster-binding residues include Cys-9, Cys-12, Cys-15, Cys-19, Cys-38, Cys-41, Cys-44, and Cys-48.

The cofactor is [4Fe-4S] cluster.

Functionally, ferredoxins are iron-sulfur proteins that transfer electrons in a wide variety of metabolic reactions. In Acetoanaerobium sticklandii (strain ATCC 12662 / DSM 519 / JCM 1433 / CCUG 9281 / NCIMB 10654 / HF) (Clostridium sticklandii), this protein is Ferredoxin.